Reading from the N-terminus, the 397-residue chain is Protein ROH1D (397 aa).

Residues 247–267 (LIVPVYTMTTVLLFVMWALVA) traverse the membrane as a helical segment.

It belongs to the ROH1 family. In terms of assembly, interacts with EXO70C2. In terms of tissue distribution, mostly expressed in mature pollen.

It localises to the membrane. The protein resides in the cytoplasm. The protein localises to the cytosol. Its function is as follows. Involved in the regulation of plant growth, and modulates pollen development to ensure male fertility. May also affect the composition of the inner seed coat mucilage layer. This Arabidopsis thaliana (Mouse-ear cress) protein is Protein ROH1D.